We begin with the raw amino-acid sequence, 122 residues long: Large ribosomal subunit protein uL14 (122 aa).

The protein belongs to the universal ribosomal protein uL14 family. As to quaternary structure, part of the 50S ribosomal subunit. Forms a cluster with proteins L3 and L19. In the 70S ribosome, L14 and L19 interact and together make contacts with the 16S rRNA in bridges B5 and B8.

Its function is as follows. Binds to 23S rRNA. Forms part of two intersubunit bridges in the 70S ribosome. This Mycobacterium leprae (strain TN) protein is Large ribosomal subunit protein uL14.